The primary structure comprises 307 residues: Thioredoxin reductase (307 aa).

36–43 (DNAAPGGK) is a binding site for FAD. Cysteine 138 and cysteine 141 are oxidised to a cystine. Residue 278–287 (DIRIKDIRQI) coordinates FAD.

Belongs to the class-II pyridine nucleotide-disulfide oxidoreductase family. In terms of assembly, homodimer. FAD serves as cofactor.

It is found in the cytoplasm. The catalysed reaction is [thioredoxin]-dithiol + NADP(+) = [thioredoxin]-disulfide + NADPH + H(+). The sequence is that of Thioredoxin reductase (trxB) from Mycoplasmopsis pulmonis (strain UAB CTIP) (Mycoplasma pulmonis).